The chain runs to 281 residues: NADPH-dependent 7-cyano-7-deazaguanine reductase (281 aa).

81–83 contributes to the substrate binding site; it reads IES. 83–84 lines the NADPH pocket; that stretch reads SK. Cysteine 188 serves as the catalytic Thioimide intermediate. Residue aspartate 195 is the Proton donor of the active site. 227-228 is a binding site for substrate; that stretch reads HE. NADPH is bound at residue 256–257; it reads RG.

Belongs to the GTP cyclohydrolase I family. QueF type 2 subfamily. Homodimer.

The protein resides in the cytoplasm. It catalyses the reaction 7-aminomethyl-7-carbaguanine + 2 NADP(+) = 7-cyano-7-deazaguanine + 2 NADPH + 3 H(+). It participates in tRNA modification; tRNA-queuosine biosynthesis. In terms of biological role, catalyzes the NADPH-dependent reduction of 7-cyano-7-deazaguanine (preQ0) to 7-aminomethyl-7-deazaguanine (preQ1). This chain is NADPH-dependent 7-cyano-7-deazaguanine reductase, found in Polaromonas naphthalenivorans (strain CJ2).